Consider the following 176-residue polypeptide: Cytochrome b (176 aa).

The next 3 membrane-spanning stretches (helical) occupy residues 33 to 53, 77 to 98, and 113 to 133; these read FGSL…FLAM, WVLR…YLHV, and WNVG…GYVL. Positions 83 and 97 each coordinate heme b.

Belongs to the cytochrome b family. The cytochrome bc1 complex contains 11 subunits: 3 respiratory subunits (MT-CYB, CYC1 and UQCRFS1), 2 core proteins (UQCRC1 and UQCRC2) and 6 low-molecular weight proteins (UQCRH/QCR6, UQCRB/QCR7, UQCRQ/QCR8, UQCR10/QCR9, UQCR11/QCR10 and a cleavage product of UQCRFS1). This cytochrome bc1 complex then forms a dimer. Heme b is required as a cofactor.

The protein resides in the mitochondrion inner membrane. Functionally, component of the ubiquinol-cytochrome c reductase complex (complex III or cytochrome b-c1 complex) that is part of the mitochondrial respiratory chain. The b-c1 complex mediates electron transfer from ubiquinol to cytochrome c. Contributes to the generation of a proton gradient across the mitochondrial membrane that is then used for ATP synthesis. This is Cytochrome b (MT-CYB) from Corynorhinus rafinesquii (Rafinesque's big-eared bat).